A 197-amino-acid chain; its full sequence is Probable nicotinate-nucleotide adenylyltransferase (197 aa).

It belongs to the NadD family.

It carries out the reaction nicotinate beta-D-ribonucleotide + ATP + H(+) = deamido-NAD(+) + diphosphate. Its pathway is cofactor biosynthesis; NAD(+) biosynthesis; deamido-NAD(+) from nicotinate D-ribonucleotide: step 1/1. In terms of biological role, catalyzes the reversible adenylation of nicotinate mononucleotide (NaMN) to nicotinic acid adenine dinucleotide (NaAD). This is Probable nicotinate-nucleotide adenylyltransferase from Bordetella pertussis (strain Tohama I / ATCC BAA-589 / NCTC 13251).